The primary structure comprises 179 residues: Warthog protein 3 (179 aa).

Residues 1 to 19 (MLYHVEMFTIILLFGFSLA) form the signal peptide. N-linked (GlcNAc...) asparagine glycosylation is found at Asn52 and Asn147.

Expressed in the trinucleate pharyngeal gland cell g1, seam cells and hypodermis.

The protein resides in the secreted. Intercellular signal essential for a variety of patterning events during development. This Caenorhabditis elegans protein is Warthog protein 3 (wrt-3).